The sequence spans 127 residues: Protein translocase subunit SecE (127 aa).

A run of 3 helical transmembrane segments spans residues 16 to 36 (AMKW…NYLY), 41 to 61 (LPLR…VALL), and 96 to 116 (IVAA…GILV).

The protein belongs to the SecE/SEC61-gamma family. Component of the Sec protein translocase complex. Heterotrimer consisting of SecY, SecE and SecG subunits. The heterotrimers can form oligomers, although 1 heterotrimer is thought to be able to translocate proteins. Interacts with the ribosome. Interacts with SecDF, and other proteins may be involved. Interacts with SecA.

It localises to the cell inner membrane. Functionally, essential subunit of the Sec protein translocation channel SecYEG. Clamps together the 2 halves of SecY. May contact the channel plug during translocation. The chain is Protein translocase subunit SecE from Salmonella typhi.